Consider the following 1475-residue polypeptide: Mediator of RNA polymerase II transcription subunit 1 (1475 aa).

Polar residues predominate over residues 1–10 (MSGSNAKSSG). Disordered stretches follow at residues 1–26 (MSGSNAKSSGTGFGSHIPSIEEKNKQ), 616–644 (ETDPQSGSSASGTTVSGSSSSSGSAKTSD), 709–992 (GVTA…VASG), 1135–1166 (QPQPGAAPTSSCLTTSGGSSDSAGSINPAGAS), 1184–1245 (NKTG…SKKA), 1263–1354 (KANS…RFDH), and 1387–1475 (PKLS…LAGE). Composition is skewed to low complexity over residues 621–641 (SGSSASGTTVSGSSSSSGSAK), 711–729 (TASSSATPTTITITPITGK), and 738–782 (KSTA…SGSS). Phosphoserine occurs at positions 830, 834, 854, and 858. 2 stretches are compositionally biased toward polar residues: residues 860–874 (VYSSPKHNTASNSPK) and 888–897 (GKPSMSTLKS). Over residues 919-934 (TSSGPSASSGSSGATG) the composition is skewed to low complexity. Pro residues predominate over residues 944–953 (APPPPPPIPP). Composition is skewed to low complexity over residues 954 to 966 (LASSSGSISSSQS), 973 to 989 (SSASGSSSTSSSATAGV), 1143 to 1159 (TSSCLTTSGGSSDSAGS), 1185 to 1225 (KTGS…TGST), and 1265 to 1276 (NSSGNLSSKLSG). Over residues 1286 to 1296 (TKSNSTNSFQE) the composition is skewed to polar residues. Low complexity-rich tracts occupy residues 1334–1346 (SGSVSPALSGSMS) and 1399–1409 (TSGRSTPSGSS). Polar residues-rich tracts occupy residues 1415-1430 (GTSSSILGPIASSTGL) and 1442-1458 (SQSGNEGLLNLSSTAGT).

It belongs to the Mediator complex subunit 1 family. As to quaternary structure, component of the Mediator complex.

It localises to the nucleus. Functionally, component of the Mediator complex, a coactivator involved in the regulated transcription of nearly all RNA polymerase II-dependent genes. Mediator functions as a bridge to convey information from gene-specific regulatory proteins to the basal RNA polymerase II transcription machinery. Mediator is recruited to promoters by direct interactions with regulatory proteins and serves as a scaffold for the assembly of a functional preinitiation complex with RNA polymerase II and the general transcription factors. Required for activated transcription of the MtnA, MtnB and MtnD genes. This Drosophila melanogaster (Fruit fly) protein is Mediator of RNA polymerase II transcription subunit 1 (MED1).